A 662-amino-acid polypeptide reads, in one-letter code: Phosphomethylpyrimidine synthase (662 aa).

Residues N235, M264, Y293, H329, 349-351 (SRG), 390-393 (DGMR), and E429 contribute to the substrate site. Zn(2+) is bound at residue H433. Residue Y456 coordinates substrate. Position 497 (H497) interacts with Zn(2+). The [4Fe-4S] cluster site is built by C577, C580, and C585.

It belongs to the ThiC family. In terms of assembly, homodimer. The cofactor is [4Fe-4S] cluster.

It catalyses the reaction 5-amino-1-(5-phospho-beta-D-ribosyl)imidazole + S-adenosyl-L-methionine = 4-amino-2-methyl-5-(phosphooxymethyl)pyrimidine + CO + 5'-deoxyadenosine + formate + L-methionine + 3 H(+). The protein operates within cofactor biosynthesis; thiamine diphosphate biosynthesis. In terms of biological role, catalyzes the synthesis of the hydroxymethylpyrimidine phosphate (HMP-P) moiety of thiamine from aminoimidazole ribotide (AIR) in a radical S-adenosyl-L-methionine (SAM)-dependent reaction. The sequence is that of Phosphomethylpyrimidine synthase from Shewanella halifaxensis (strain HAW-EB4).